The following is a 138-amino-acid chain: Large ribosomal subunit protein bL17 (138 aa).

The protein belongs to the bacterial ribosomal protein bL17 family. In terms of assembly, part of the 50S ribosomal subunit. Contacts protein L32.

In Halorhodospira halophila (strain DSM 244 / SL1) (Ectothiorhodospira halophila (strain DSM 244 / SL1)), this protein is Large ribosomal subunit protein bL17.